Consider the following 170-residue polypeptide: Type IV pilus assembly protein C (170 aa).

Positions 1-23 (MKSKLPLILINLSLISSPLGANA) are cleaved as a signal peptide. Positions 87–107 (KTVSKPAKSNTPPQQAPVNNS) are disordered. Residues 93–107 (AKSNTPPQQAPVNNS) show a composition bias toward polar residues. Residues 109-166 (RSILEAELSNERKALTEAQKMLSQARLAKGGNINHQKINALQSNVLDRQQNIQALQRE) are a coiled coil.

The protein localises to the periplasm. Functionally, required for stabilizing type IV pilus (T4p) in extended, nonretracted conformation on the bacterial cell surface. This is Type IV pilus assembly protein C from Neisseria gonorrhoeae (strain ATCC 700825 / FA 1090).